The sequence spans 267 residues: tRNA pseudouridine synthase A (267 aa).

Asp-55 acts as the Nucleophile in catalysis. Tyr-109 provides a ligand contact to substrate.

This sequence belongs to the tRNA pseudouridine synthase TruA family.

The catalysed reaction is uridine(38/39/40) in tRNA = pseudouridine(38/39/40) in tRNA. Its function is as follows. Formation of pseudouridine at positions 38, 39 and 40 in the anticodon stem and loop of transfer RNAs. This Natronomonas pharaonis (strain ATCC 35678 / DSM 2160 / CIP 103997 / JCM 8858 / NBRC 14720 / NCIMB 2260 / Gabara) (Halobacterium pharaonis) protein is tRNA pseudouridine synthase A.